The sequence spans 495 residues: Trigger factor (495 aa).

The PPIase FKBP-type domain maps to 169–254 (GDRVTIDYLG…VKEVAAPGEV (86 aa)). Positions 439–495 (ALLADDESEDKPAAKKAAPKKKAAKAEATEAAAEGEEAAVPKKKAAPKKKAAEDSAE) are disordered.

It belongs to the FKBP-type PPIase family. Tig subfamily.

The protein resides in the cytoplasm. It catalyses the reaction [protein]-peptidylproline (omega=180) = [protein]-peptidylproline (omega=0). Its function is as follows. Involved in protein export. Acts as a chaperone by maintaining the newly synthesized protein in an open conformation. Functions as a peptidyl-prolyl cis-trans isomerase. The sequence is that of Trigger factor from Rhizobium rhizogenes (strain K84 / ATCC BAA-868) (Agrobacterium radiobacter).